The following is a 127-amino-acid chain: uncharacterized protein (127 aa).

2 helical membrane passes run 13-35 and 57-81; these read ILLL…GIIF and AVLI…IMIW.

It localises to the cell membrane. This is an uncharacterized protein from Mycoplasma genitalium (strain ATCC 33530 / DSM 19775 / NCTC 10195 / G37) (Mycoplasmoides genitalium).